The chain runs to 331 residues: Geranylgeranyl pyrophosphate synthase dpmaD (331 aa).

Lysine 53, arginine 56, and histidine 85 together coordinate isopentenyl diphosphate. Positions 92 and 96 each coordinate Mg(2+). Position 101 (arginine 101) interacts with dimethylallyl diphosphate. Arginine 102 is an isopentenyl diphosphate binding site. Positions 179, 180, and 213 each coordinate dimethylallyl diphosphate. Aspartate 216 contacts Mg(2+). Dimethylallyl diphosphate-binding residues include asparagine 220, lysine 230, and lysine 240.

It belongs to the FPP/GGPP synthase family. Mg(2+) serves as cofactor.

It catalyses the reaction isopentenyl diphosphate + dimethylallyl diphosphate = (2E)-geranyl diphosphate + diphosphate. The enzyme catalyses isopentenyl diphosphate + (2E)-geranyl diphosphate = (2E,6E)-farnesyl diphosphate + diphosphate. The catalysed reaction is isopentenyl diphosphate + (2E,6E)-farnesyl diphosphate = (2E,6E,10E)-geranylgeranyl diphosphate + diphosphate. It participates in secondary metabolite biosynthesis; terpenoid biosynthesis. Geranylgeranyl pyrophosphate synthase; part of the gene cluster that mediates the biosynthesis of the diterpenoid pyrones subglutinols A and B. The first step of the pathway is the synthesis of the alpha-pyrone moiety by the polyketide synthase dpmaA via condensation of one acetyl-CoA starter unit with 3 malonyl-CoA units and 2 methylations. The alpha-pyrone is then combined with geranylgeranyl pyrophosphate (GGPP) formed by the GGPP synthase dpmaD through the action of the prenyltransferase dpmaC to yield a linear alpha-pyrone diterpenoid. Subsequent steps in the diterpenoid pyrone biosynthetic pathway involve the decalin core formation, which is initiated by the epoxidation of the C10-C11 olefin by the FAD-dependent oxidoreductase dpmaE, and is followed by a cyclization cascade catalyzed by the terpene cyclase dpmaB. The dehydrogenase dpmaF is then involved in tetrahydrofuran (THF) ring formation at the C5 unit to complete the formation of subglutinols A and B. The polypeptide is Geranylgeranyl pyrophosphate synthase dpmaD (Metarhizium anisopliae (Entomophthora anisopliae)).